The sequence spans 236 residues: Phosphoribosylaminoimidazole-succinocarboxamide synthase (236 aa).

The protein belongs to the SAICAR synthetase family.

The catalysed reaction is 5-amino-1-(5-phospho-D-ribosyl)imidazole-4-carboxylate + L-aspartate + ATP = (2S)-2-[5-amino-1-(5-phospho-beta-D-ribosyl)imidazole-4-carboxamido]succinate + ADP + phosphate + 2 H(+). Its pathway is purine metabolism; IMP biosynthesis via de novo pathway; 5-amino-1-(5-phospho-D-ribosyl)imidazole-4-carboxamide from 5-amino-1-(5-phospho-D-ribosyl)imidazole-4-carboxylate: step 1/2. In Lactococcus lactis subsp. cremoris (Streptococcus cremoris), this protein is Phosphoribosylaminoimidazole-succinocarboxamide synthase (purC).